Consider the following 444-residue polypeptide: Tubulin beta-8 chain (444 aa).

The MREI motif signature appears at 1-4 (MREI). Residues Q11, E69, S138, G142, T143, and G144 each contribute to the GTP site. E69 contributes to the Mg(2+) binding site. S172 is modified (phosphoserine; by CDK1). Residues N204 and N226 each contribute to the GTP site. The residue at position 436 (E436) is a 5-glutamyl polyglutamate.

This sequence belongs to the tubulin family. Dimer of alpha and beta chains. A typical microtubule is a hollow water-filled tube with an outer diameter of 25 nm and an inner diameter of 15 nM. Alpha-beta heterodimers associate head-to-tail to form protofilaments running lengthwise along the microtubule wall with the beta-tubulin subunit facing the microtubule plus end conferring a structural polarity. Microtubules usually have 13 protofilaments but different protofilament numbers can be found in some organisms and specialized cells. Requires Mg(2+) as cofactor. Post-translationally, some glutamate residues at the C-terminus are polyglycylated, resulting in polyglycine chains on the gamma-carboxyl group. Glycylation is mainly limited to tubulin incorporated into axonemes (cilia and flagella) whereas glutamylation is prevalent in neuronal cells, centrioles, axonemes, and the mitotic spindle. Both modifications can coexist on the same protein on adjacent residues, and lowering polyglycylation levels increases polyglutamylation, and reciprocally. Cilia and flagella glycylation is required for their stability and maintenance. Flagella glycylation controls sperm motility. Some glutamate residues at the C-terminus are polyglutamylated, resulting in polyglutamate chains on the gamma-carboxyl group. Polyglutamylation plays a key role in microtubule severing by spastin (SPAST). SPAST preferentially recognizes and acts on microtubules decorated with short polyglutamate tails: severing activity by SPAST increases as the number of glutamates per tubulin rises from one to eight, but decreases beyond this glutamylation threshold. Glutamylation is also involved in cilia motility. In terms of processing, phosphorylated on Ser-172 by CDK1 during the cell cycle, from metaphase to telophase, but not in interphase. This phosphorylation inhibits tubulin incorporation into microtubules.

The protein resides in the cytoplasm. It is found in the cytoskeleton. Its subcellular location is the spindle. Its function is as follows. Tubulin is the major constituent of microtubules, a cylinder consisting of laterally associated linear protofilaments composed of alpha- and beta-tubulin heterodimers. Microtubules grow by the addition of GTP-tubulin dimers to the microtubule end, where a stabilizing cap forms. Below the cap, tubulin dimers are in GDP-bound state, owing to GTPase activity of alpha-tubulin. Has a key role in meiotic spindle assembly and oocyte maturation. The chain is Tubulin beta-8 chain (TUBB8) from Papio hamadryas (Hamadryas baboon).